The sequence spans 764 residues: Elongation factor G, mitochondrial (764 aa).

The N-terminal 23 residues, 1–23 (MIRSLRAVSRLGARGFSSFAAAR), are a transit peptide targeting the mitochondrion. The 282-residue stretch at 56–337 (ARMRNIGISA…AICEYLPDPS (282 aa)) folds into the tr-type G domain. GTP is bound by residues 65–72 (AHIDSGKT), 136–140 (DTPGH), and 190–193 (NKMD).

The protein belongs to the TRAFAC class translation factor GTPase superfamily. Classic translation factor GTPase family. EF-G/EF-2 subfamily.

It localises to the mitochondrion. It functions in the pathway protein biosynthesis; polypeptide chain elongation. Its function is as follows. Mitochondrial GTPase that catalyzes the GTP-dependent ribosomal translocation step during translation elongation. During this step, the ribosome changes from the pre-translocational (PRE) to the post-translocational (POST) state as the newly formed A-site-bound peptidyl-tRNA and P-site-bound deacylated tRNA move to the P and E sites, respectively. Catalyzes the coordinated movement of the two tRNA molecules, the mRNA and conformational changes in the ribosome. The sequence is that of Elongation factor G, mitochondrial from Yarrowia lipolytica (strain CLIB 122 / E 150) (Yeast).